We begin with the raw amino-acid sequence, 917 residues long: Translation initiation factor IF-2 (917 aa).

Residues 241-312 (EEAKKGTLHK…GGWRSGGGRK (72 aa)) are disordered. A compositionally biased stretch (basic and acidic residues) spans 252–262 (AKAEGAEDKKK). The segment covering 274–283 (SSETSSTWQE) has biased composition (polar residues). The segment covering 298–308 (TSGGVGGWRSG) has biased composition (gly residues). One can recognise a tr-type G domain in the interval 415–582 (PRPPVVTVMG…NVLLQAEILE (168 aa)). Positions 424–431 (GHVDHGKT) are G1. Residue 424-431 (GHVDHGKT) coordinates GTP. Residues 449–453 (GITQH) are G2. Residues 470–473 (DTPG) are G3. GTP contacts are provided by residues 470–474 (DTPGH) and 524–527 (NKID). The tract at residues 524–527 (NKID) is G4. The interval 560 to 562 (SAK) is G5.

It belongs to the TRAFAC class translation factor GTPase superfamily. Classic translation factor GTPase family. IF-2 subfamily.

Its subcellular location is the cytoplasm. Functionally, one of the essential components for the initiation of protein synthesis. Protects formylmethionyl-tRNA from spontaneous hydrolysis and promotes its binding to the 30S ribosomal subunits. Also involved in the hydrolysis of GTP during the formation of the 70S ribosomal complex. The sequence is that of Translation initiation factor IF-2 from Polynucleobacter necessarius subsp. necessarius (strain STIR1).